Consider the following 364-residue polypeptide: MITTTIFPGRYVQGAGAINILEEELSRFGERAFVVIDDFVDKNVLGENFFSSFTKVRVNKQIFGGECSDEEIERLSGLVEEETDVVVGIGGGKTLDTAKAVAYKLKKPVVIVPTIASTDAPCSALSVIYTPNGEFKRYLFLPRNPDVVLVDTEIVAKAPARFLVAGMGDALATWFEAESCKQKYAPNMTGRLGSMTAYALARLCYETLLEYGVLAKRSVEEKSVTPALEKIVEANTLLSGLGFESGGLAAAHAIHNGLTVLENTHKYLHGEKVAIGVLASLFLTDKPRKMIEEVYSFCEEVGLPTTLAEIGLDGVSDEDLMKVAEKACDKNETIHNEPQPVTSKDVFFALKAADRYGRMRKNLT.

NAD(+) is bound by residues D37, G92, K93, T114, and S117. D119 is a glycerol binding site. S123, L125, and Y129 together coordinate NAD(+). 3 residues coordinate glycerol: D169, H252, and H269. Zn(2+)-binding residues include D169, H252, and H269.

This sequence belongs to the iron-containing alcohol dehydrogenase family. Zn(2+) serves as cofactor.

It catalyses the reaction glycerol + NAD(+) = dihydroxyacetone + NADH + H(+). Its pathway is polyol metabolism; glycerol fermentation; glycerone phosphate from glycerol (oxidative route): step 1/2. In terms of biological role, catalyzes the NAD-dependent oxidation of glycerol to dihydroxyacetone (glycerone). This Thermotoga maritima (strain ATCC 43589 / DSM 3109 / JCM 10099 / NBRC 100826 / MSB8) protein is Glycerol dehydrogenase (gldA).